We begin with the raw amino-acid sequence, 87 residues long: Small ribosomal subunit protein bS20 (87 aa).

The disordered stretch occupies residues 1-26 (MANIKSAQKRAVQSEKRRQHNASQRS).

The protein belongs to the bacterial ribosomal protein bS20 family.

In terms of biological role, binds directly to 16S ribosomal RNA. This Glaesserella parasuis serovar 5 (strain SH0165) (Haemophilus parasuis) protein is Small ribosomal subunit protein bS20.